Here is a 689-residue protein sequence, read N- to C-terminus: Glycine--tRNA ligase beta subunit (689 aa).

It belongs to the class-II aminoacyl-tRNA synthetase family. Tetramer of two alpha and two beta subunits.

The protein localises to the cytoplasm. The catalysed reaction is tRNA(Gly) + glycine + ATP = glycyl-tRNA(Gly) + AMP + diphosphate. The chain is Glycine--tRNA ligase beta subunit from Serratia proteamaculans (strain 568).